Reading from the N-terminus, the 416-residue chain is NADH-quinone oxidoreductase subunit H (416 aa).

Helical transmembrane passes span 16–36 (LILA…LAAI), 84–104 (PVYL…FAVI), 124–144 (LAVA…GIVL), 165–185 (VVSY…YAGT), 197–217 (STWY…SMVG), 260–280 (VSAL…PISL), 288–308 (WWPL…YIWL), 320–340 (FMAI…MIVA), and 353–373 (WASG…VILW).

This sequence belongs to the complex I subunit 1 family. NDH-1 is composed of 14 different subunits. Subunits NuoA, H, J, K, L, M, N constitute the membrane sector of the complex.

It localises to the cell membrane. The enzyme catalyses a quinone + NADH + 5 H(+)(in) = a quinol + NAD(+) + 4 H(+)(out). In terms of biological role, NDH-1 shuttles electrons from NADH, via FMN and iron-sulfur (Fe-S) centers, to quinones in the respiratory chain. The immediate electron acceptor for the enzyme in this species is believed to be menaquinone. Couples the redox reaction to proton translocation (for every two electrons transferred, four hydrogen ions are translocated across the cytoplasmic membrane), and thus conserves the redox energy in a proton gradient. This subunit may bind ubiquinone. This chain is NADH-quinone oxidoreductase subunit H, found in Mycobacterium sp. (strain KMS).